The primary structure comprises 270 residues: Putative phosphoenolpyruvate synthase regulatory protein (270 aa).

An ADP-binding site is contributed by 150–157 (GVSRCGKT).

The protein belongs to the pyruvate, phosphate/water dikinase regulatory protein family. PSRP subfamily.

The enzyme catalyses [pyruvate, water dikinase] + ADP = [pyruvate, water dikinase]-phosphate + AMP + H(+). It carries out the reaction [pyruvate, water dikinase]-phosphate + phosphate + H(+) = [pyruvate, water dikinase] + diphosphate. Functionally, bifunctional serine/threonine kinase and phosphorylase involved in the regulation of the phosphoenolpyruvate synthase (PEPS) by catalyzing its phosphorylation/dephosphorylation. The protein is Putative phosphoenolpyruvate synthase regulatory protein of Shewanella halifaxensis (strain HAW-EB4).